Reading from the N-terminus, the 318-residue chain is Cobalamin biosynthesis protein CobD (318 aa).

The next 5 membrane-spanning stretches (helical) occupy residues 56–76 (VLWLLVVGITWLVSWGFLWLM), 78–98 (EINPWLGWLAQVWMIYTLLAG), 153–173 (VDGVIAPLFFLMLGGAPLAMA), 204–224 (LANWLPARLSWVLLSAAAWLI), and 298–318 (MMASLLALLLFALTHLLLVGI).

It belongs to the CobD/CbiB family.

It localises to the cell membrane. It functions in the pathway cofactor biosynthesis; adenosylcobalamin biosynthesis. Converts cobyric acid to cobinamide by the addition of aminopropanol on the F carboxylic group. This chain is Cobalamin biosynthesis protein CobD, found in Yersinia enterocolitica serotype O:8 / biotype 1B (strain NCTC 13174 / 8081).